Here is a 101-residue protein sequence, read N- to C-terminus: Protein S100-A7A (101 aa).

2 consecutive EF-hand domains span residues 13–48 (MIDM…SACD) and 50–85 (KGIH…IAAD). Zn(2+)-binding residues include H18, E28, and E38. 2 residues coordinate Ca(2+): D63 and N65. E66 lines the Zn(2+) pocket. Residues D67, K69, and E74 each contribute to the Ca(2+) site. Residues H87 and H91 each contribute to the Zn(2+) site.

It belongs to the S-100 family. As to expression, overexpressed in psoriasis.

The protein resides in the cytoplasm. May be involved in epidermal differentiation and inflammation and might therefore be important for the pathogenesis of psoriasis and other diseases. The polypeptide is Protein S100-A7A (S100A7A) (Homo sapiens (Human)).